Consider the following 117-residue polypeptide: Putative pterin-4-alpha-carbinolamine dehydratase (117 aa).

Belongs to the pterin-4-alpha-carbinolamine dehydratase family.

The catalysed reaction is (4aS,6R)-4a-hydroxy-L-erythro-5,6,7,8-tetrahydrobiopterin = (6R)-L-erythro-6,7-dihydrobiopterin + H2O. The protein is Putative pterin-4-alpha-carbinolamine dehydratase of Colwellia psychrerythraea (strain 34H / ATCC BAA-681) (Vibrio psychroerythus).